A 144-amino-acid polypeptide reads, in one-letter code: Large ribosomal subunit protein uL13 (144 aa).

It belongs to the universal ribosomal protein uL13 family. As to quaternary structure, part of the 50S ribosomal subunit.

In terms of biological role, this protein is one of the early assembly proteins of the 50S ribosomal subunit, although it is not seen to bind rRNA by itself. It is important during the early stages of 50S assembly. The chain is Large ribosomal subunit protein uL13 from Lachnoclostridium phytofermentans (strain ATCC 700394 / DSM 18823 / ISDg) (Clostridium phytofermentans).